The chain runs to 874 residues: Valine--tRNA ligase (874 aa).

The 'HIGH' region signature appears at Pro51–His61. Positions Lys533 to Ser537 match the 'KMSKS' region motif. Lys536 is an ATP binding site. A coiled-coil region spans residues Leu813–Gln873.

This sequence belongs to the class-I aminoacyl-tRNA synthetase family. ValS type 1 subfamily. In terms of assembly, monomer.

It is found in the cytoplasm. The catalysed reaction is tRNA(Val) + L-valine + ATP = L-valyl-tRNA(Val) + AMP + diphosphate. Its function is as follows. Catalyzes the attachment of valine to tRNA(Val). As ValRS can inadvertently accommodate and process structurally similar amino acids such as threonine, to avoid such errors, it has a 'posttransfer' editing activity that hydrolyzes mischarged Thr-tRNA(Val) in a tRNA-dependent manner. This chain is Valine--tRNA ligase, found in Helicobacter pylori (strain ATCC 700392 / 26695) (Campylobacter pylori).